The chain runs to 74 residues: Brevinin-2CG1 (74 aa).

A signal peptide spans 1 to 22 (MFTMKKSMLVLFFLGTISLSLC). Positions 23 to 39 (EEERNADEDDGEMTEEV) are cleaved as a propeptide — removed in mature form. Cys-68 and Cys-74 form a disulfide bridge.

As to expression, expressed by the skin glands.

The protein localises to the secreted. Antimicrobial peptide active against a variety of Gram-positive and some Gram-negative bacterial strains. Has antifungal activity against a slime mold isolate. Has hemolytic activity against human erythrocytes. This is Brevinin-2CG1 from Amolops chunganensis (Chungan torrent frog).